The sequence spans 767 residues: Cadherin-5 (767 aa).

The first 29 residues, 1 to 29 (MMKQCARRQMTEPVFRVAVLLALCSLSIG), serve as a signal peptide directing secretion. Residues 30 to 51 (VDVHQAQKTPSISSAALQRHKR) constitute a propeptide that is removed on maturation. At 30 to 593 (VDVHQAQKTP…SYARTGMSVS (564 aa)) the chain is on the extracellular side. Ca(2+) contacts are provided by glutamate 62, glutamate 63, aspartate 113, and glutamate 115. 5 consecutive Cadherin domains span residues 86–155 (RYIL…IPVF), 155–261 (FDSD…IATF), 262–373 (KKER…PPIF), 374–475 (NQTE…APEL), and 475–581 (LTNG…RVEY). The N-linked (GlcNAc...) asparagine glycan is linked to asparagine 121. Ca(2+) contacts are provided by aspartate 147, isoleucine 148, asparagine 149, aspartate 150, asparagine 151, aspartate 180, and aspartate 182. An N-linked (GlcNAc...) asparagine glycan is attached at asparagine 197. Aspartate 233 is a binding site for Ca(2+). N-linked (GlcNAc...) asparagine glycans are attached at residues asparagine 374, asparagine 477, and asparagine 518. Residues 594-614 (ALLAILLCIITILVIVILIVL) traverse the membrane as a helical segment. Residues 615 to 767 (RRRYQKEVLV…VDGSDSDSSY (153 aa)) lie on the Cytoplasmic side of the membrane.

The protein localises to the cell membrane. The protein resides in the cell junction. It is found in the adherens junction. Functionally, cadherins are calcium-dependent cell adhesion proteins. They preferentially interact with themselves in a homophilic manner in connecting cells; cadherins may thus contribute to the sorting of heterogeneous cell types. Required for embryonic cardiac looping and heart chamber development, via promotion of cell-cell junction formation and subsequent attachment between the endothelial and myocardial layers of the heart. Required for the directional migration and delamination of endothelial cell monolayers, by which common cardinal veins form via the lumen ensheathment mechanism of vessel development as they migrate and connect with the heart inflow tract. Required for the formation of filopodia extensions (sprouts) at the initiation of intersegmental vessel development, by acting (via its C-terminus) to facilitate anchoring of the actin cytoskeleton to cell junctions in endothelial cells. Then positively regulates dorsal migration of stalk cells and sprout outgrowth towards the dorsal longitudinal anastomotic vessels (DLAV) via endothelial cell elongation. Following contact with the DLAV, required for intersegmental vessel lumen formation, potentially via facilitating the formation and/or extension of endothelial cell tight junctions that are required during tubulogenesis. This Danio rerio (Zebrafish) protein is Cadherin-5.